An 81-amino-acid polypeptide reads, in one-letter code: uncharacterized protein (81 aa).

The interval 11–34 (GSVSSSNKVSVANGSSSSSFGSNG) is disordered.

This is an uncharacterized protein from Dictyostelium discoideum (Social amoeba).